The sequence spans 109 residues: Putative double-stranded DNA mimic protein YciU (109 aa).

Belongs to the putative dsDNA mimic protein family.

May act as a double-stranded DNA (dsDNA) mimic. Probably regulates the activity of a dsDNA-binding protein. In Escherichia coli O45:K1 (strain S88 / ExPEC), this protein is Putative double-stranded DNA mimic protein YciU.